The sequence spans 429 residues: Ribosomal protein uS12 methylthiotransferase RimO (429 aa).

Positions 2-118 (HNIFLLSLGC…VLRAIGAEYR (117 aa)) constitute an MTTase N-terminal domain. 6 residues coordinate [4Fe-4S] cluster: Cys-11, Cys-47, Cys-81, Cys-142, Cys-146, and Cys-149. The region spanning 128–357 (LTPPHYAFLK…MELQETISQE (230 aa)) is the Radical SAM core domain. The TRAM domain maps to 360-427 (REFEGNEIVV…PYDLEGEVIG (68 aa)).

This sequence belongs to the methylthiotransferase family. RimO subfamily. [4Fe-4S] cluster serves as cofactor.

It is found in the cytoplasm. The catalysed reaction is L-aspartate(89)-[ribosomal protein uS12]-hydrogen + (sulfur carrier)-SH + AH2 + 2 S-adenosyl-L-methionine = 3-methylsulfanyl-L-aspartate(89)-[ribosomal protein uS12]-hydrogen + (sulfur carrier)-H + 5'-deoxyadenosine + L-methionine + A + S-adenosyl-L-homocysteine + 2 H(+). Catalyzes the methylthiolation of an aspartic acid residue of ribosomal protein uS12. The polypeptide is Ribosomal protein uS12 methylthiotransferase RimO (Chlorobium limicola (strain DSM 245 / NBRC 103803 / 6330)).